The sequence spans 189 residues: MASYSTNEFKGGLKVLIDGNPMVIVENEFVKPGKGQAFNRVKLKNLLNDRVVEKTFKSGESVEAADVEELTTVYSYFDGDSYVFMHPETFEQYMVSEEALGETKKWLKDQDEYQVILFNGQPISIIAANFVNLEIIETDPGLKGDTAGTGGKPATLSTGAVVRVPLFVQTGEIIKVDTRTSTYVSRVKD.

Lysine 34 is subject to N6-(3,6-diaminohexanoyl)-5-hydroxylysine.

Belongs to the elongation factor P family. Post-translationally, may be beta-lysylated on the epsilon-amino group of Lys-34 by the combined action of EpmA and EpmB, and then hydroxylated on the C5 position of the same residue by EpmC (if this protein is present). Lysylation is critical for the stimulatory effect of EF-P on peptide-bond formation. The lysylation moiety may extend toward the peptidyltransferase center and stabilize the terminal 3-CCA end of the tRNA. Hydroxylation of the C5 position on Lys-34 may allow additional potential stabilizing hydrogen-bond interactions with the P-tRNA.

It is found in the cytoplasm. It functions in the pathway protein biosynthesis; polypeptide chain elongation. Its function is as follows. Involved in peptide bond synthesis. Alleviates ribosome stalling that occurs when 3 or more consecutive Pro residues or the sequence PPG is present in a protein, possibly by augmenting the peptidyl transferase activity of the ribosome. Modification of Lys-34 is required for alleviation. This Francisella tularensis subsp. tularensis (strain FSC 198) protein is Elongation factor P.